The chain runs to 221 residues: Carotenogenesis protein CarR (221 aa).

6 consecutive transmembrane segments (helical) span residues 56–76 (LGLLAAVVLLAVGAVTGPLLL), 79–99 (APLLAMLVGTSAVCAWGALSP), 107–127 (LGVGLAVVSAAALVLARGAPH), 136–156 (VCTVSHLAIGVVPLVVALFAL), 166–186 (AVVAGLSVGSTGALLGELACE), and 191–211 (HVLSHHLLAWVVITVVLVVIS).

It localises to the cell inner membrane. In terms of biological role, negative regulator of the carotenoid synthesis regulon. It is probably inactivated by protoporphyrin IX in the presence of blue light. Inactivation of CarR leads to loss of negative control over the carotenogenesis protein CarQ. The sequence is that of Carotenogenesis protein CarR (carR) from Myxococcus xanthus.